The primary structure comprises 144 residues: Large ribosomal subunit protein uL15 (144 aa).

A disordered region spans residues 1–53 (MRLNTLSPAEGAKHSAKRLGRGIGSGLGKTGGRGHKGQKSRTGGGVRRGFEGG). A compositionally biased stretch (gly residues) spans 21 to 31 (RGIGSGLGKTG).

It belongs to the universal ribosomal protein uL15 family. Part of the 50S ribosomal subunit.

In terms of biological role, binds to the 23S rRNA. In Haemophilus influenzae (strain ATCC 51907 / DSM 11121 / KW20 / Rd), this protein is Large ribosomal subunit protein uL15.